Here is a 542-residue protein sequence, read N- to C-terminus: Chaperonin GroEL 1 (542 aa).

ATP is bound by residues 29–32 (TIGP), 86–90 (DGTTT), Gly414, 479–481 (DAL), and Asp495.

Belongs to the chaperonin (HSP60) family. Forms a cylinder of 14 subunits composed of two heptameric rings stacked back-to-back. Interacts with the co-chaperonin GroES.

It is found in the cytoplasm. The enzyme catalyses ATP + H2O + a folded polypeptide = ADP + phosphate + an unfolded polypeptide.. In terms of biological role, together with its co-chaperonin GroES, plays an essential role in assisting protein folding. The GroEL-GroES system forms a nano-cage that allows encapsulation of the non-native substrate proteins and provides a physical environment optimized to promote and accelerate protein folding. In Synechococcus sp. (strain JA-3-3Ab) (Cyanobacteria bacterium Yellowstone A-Prime), this protein is Chaperonin GroEL 1.